The primary structure comprises 229 residues: Complex I assembly factor TMEM126B, mitochondrial (229 aa).

The next 4 helical transmembrane spans lie at 71-91 (IRGT…ANLV), 109-129 (LTTL…TDAL), 140-160 (VLRS…ALAF), and 198-218 (VPLL…YAVC).

In terms of assembly, part of the mitochondrial complex I assembly/MCIA complex that comprises at least the core subunits TMEM126B, NDUFAF1, ECSIT and ACAD9 and complement subunits such as COA1 and TMEM186. Associates with the intermediate 370 kDa subcomplex of incompletely assembled complex I. Interacts with TMEM70.

The protein resides in the mitochondrion membrane. Functionally, as part of the MCIA complex, involved in the assembly of the mitochondrial complex I. Participates in constructing the membrane arm of complex I. The sequence is that of Complex I assembly factor TMEM126B, mitochondrial from Rattus norvegicus (Rat).